Consider the following 60-residue polypeptide: Large ribosomal subunit protein bL32 (60 aa).

Residues 1–20 (MAVQKSRKSRSRRDMRRSHH) are compositionally biased toward basic residues. The segment at 1–22 (MAVQKSRKSRSRRDMRRSHHRM) is disordered.

It belongs to the bacterial ribosomal protein bL32 family.

The polypeptide is Large ribosomal subunit protein bL32 (Psychrobacter arcticus (strain DSM 17307 / VKM B-2377 / 273-4)).